The following is a 422-amino-acid chain: BTB/POZ domain-containing protein KCTD18 (422 aa).

A BTB domain is found at 12 to 80 (DILRLNVGGC…YLHGEVHIPT (69 aa)). 2 disordered regions span residues 289–357 (VKNS…THLP) and 376–422 (LRRT…DQTK). A compositionally biased stretch (pro residues) spans 396-406 (PAGPPEPPPDA). A compositionally biased stretch (polar residues) spans 413–422 (WTENGQDQTK).

This Bos taurus (Bovine) protein is BTB/POZ domain-containing protein KCTD18 (KCTD18).